The chain runs to 63 residues: MLCDNFPGAVFPGCYWGSYGYPLGYSVGCGYGSTYSPVGYGFGYGYNGCGAFGYRRYSPFALY.

The tract at residues Pro12–Tyr54 is 12 X 2 AA repeats of G-[YCGS].

It belongs to the KRTAP type 8 family. As to quaternary structure, interacts with hair keratins. Is essentially restricted to only one vertical half of the hair forming compartment and in beard hairs is absent from the central medulla.

In the hair cortex, hair keratin intermediate filaments are embedded in an interfilamentous matrix, consisting of hair keratin-associated proteins (KRTAP), which are essential for the formation of a rigid and resistant hair shaft through their extensive disulfide bond cross-linking with abundant cysteine residues of hair keratins. The matrix proteins include the high-sulfur and high-glycine-tyrosine keratins. In Homo sapiens (Human), this protein is Keratin-associated protein 8-1 (KRTAP8-1).